Here is a 528-residue protein sequence, read N- to C-terminus: Ladinin-1 (528 aa).

Positions 1 to 404 (MSVSRKDWSA…NSETPLTRSA (404 aa)) are disordered. Phosphoserine occurs at positions 38, 56, 62, 72, and 76. Positions 88-97 (RTRKERRQRR) are enriched in basic residues. Ser119 carries the post-translational modification Phosphoserine. The span at 134–173 (KKVEALPRRRLSREQRGPWAQDEERLKNRELAEGEKRLPE) shows a compositional bias: basic and acidic residues. SEK repeat units follow at residues 184 to 186 (SEK), 190 to 192 (SEK), 202 to 204 (SEK), and 208 to 210 (SEK). The tract at residues 184–281 (SEKTPVSEKT…MQERKLVSEK (98 aa)) is 6 X SEK repeats. Composition is skewed to basic and acidic residues over residues 218-231 (SLTE…KLVP) and 267-279 (IVSE…KLVS). SEK repeat units follow at residues 269 to 271 (SEK) and 279 to 281 (SEK). The span at 304–316 (EQPQTTGGSQATT) shows a compositional bias: polar residues. Phosphoserine is present on residues Ser328, Ser358, Ser367, Ser405, and Ser496. A compositionally biased stretch (low complexity) spans 365-377 (TPSPTLLTYSSSL). Positions 492–528 (KTQDSGDHGSQEVRKEASVTKRAQWGSKPSTSLDAEV) are disordered. The span at 495 to 510 (DSGDHGSQEVRKEASV) shows a compositional bias: basic and acidic residues. The span at 518 to 528 (SKPSTSLDAEV) shows a compositional bias: polar residues.

In terms of tissue distribution, expressed in kidney, lung and keratinocytes followed by liver, spleen and brain. Not expressed in testis, skeletal and heart muscle and in fibroblasts.

Its subcellular location is the secreted. The protein localises to the extracellular space. The protein resides in the extracellular matrix. It is found in the basement membrane. Its function is as follows. Anchoring filament protein which is a component of the basement membrane zone. The chain is Ladinin-1 (Lad1) from Mus musculus (Mouse).